The sequence spans 327 residues: MLVPRVWSSVRLGLSRVLSRTLRGWPSGEGRGMDLSGIYPPVTTPFTATAEVDYGKLEENLHKLGTLPFRGFVVQGSNGEFPFLTSSERLEVVSRARQALPKDKLLLAGSGCESTQATVEMTVSMAQVGADAAMVVTPCYYRGRMSSAALIHHYTKVADLSPVPVVLYSVPANTGLDLPVDAVVTLSQHPNIVGIKDSGGDVTRIGLIVHKTRSQDFQVLAGSAGFLLASYAIGAVGGVCALANVLGSQVCQLERLCLTGQWEDAQKLQHRLIEPNTAVTRRFGIPGLKKTMDWFGYYGGPCRSPLQELSPAQEEALRLDFASNGWL.

The N-terminal 25 residues, 1–25, are a transit peptide targeting the mitochondrion; that stretch reads MLVPRVWSSVRLGLSRVLSRTLRGW. 77–78 provides a ligand contact to substrate; it reads SN. The Schiff-base intermediate with substrate role is filled by K196. Positions 198 and 222 each coordinate substrate.

This sequence belongs to the DapA family. In terms of assembly, homotetramer.

It localises to the mitochondrion. The catalysed reaction is (4S)-4-hydroxy-2-oxoglutarate = glyoxylate + pyruvate. It catalyses the reaction (4R)-4-hydroxy-2-oxoglutarate = glyoxylate + pyruvate. With respect to regulation, inhibited by divalent cations. Its function is as follows. Catalyzes the final step in the metabolic pathway of hydroxyproline. This Bos taurus (Bovine) protein is 4-hydroxy-2-oxoglutarate aldolase, mitochondrial (HOGA1).